We begin with the raw amino-acid sequence, 149 residues long: Succinate dehydrogenase assembly factor 2, mitochondrial (149 aa).

The protein belongs to the SDHAF2 family. Interacts with the flavoprotein subunit within the SDH catalytic dimer.

Its subcellular location is the mitochondrion matrix. Its function is as follows. Plays an essential role in the assembly of succinate dehydrogenase (SDH), an enzyme complex (also referred to as respiratory complex II) that is a component of both the tricarboxylic acid (TCA) cycle and the mitochondrial electron transport chain, and which couples the oxidation of succinate to fumarate with the reduction of ubiquinone (coenzyme Q) to ubiquinol. Required for flavinylation (covalent attachment of FAD) of the flavoprotein subunit of the SDH catalytic dimer. This is Succinate dehydrogenase assembly factor 2, mitochondrial from Scheffersomyces stipitis (strain ATCC 58785 / CBS 6054 / NBRC 10063 / NRRL Y-11545) (Yeast).